A 62-amino-acid chain; its full sequence is Alpha-conotoxin-like Bn1.3 (62 aa).

An N-terminal signal peptide occupies residues Met1–Ala18. Positions Val19–Arg48 are excised as a propeptide. Intrachain disulfides connect Cys51–Cys57 and Cys52–Cys61. Residue Cys61 is modified to Cysteine amide.

The protein belongs to the conotoxin A superfamily. In terms of tissue distribution, expressed by the venom duct.

The protein resides in the secreted. Does not show activity on the acetylcholine receptors tested. The polypeptide is Alpha-conotoxin-like Bn1.3 (Conus bandanus (Banded marble cone)).